A 391-amino-acid polypeptide reads, in one-letter code: Nucleosome assembly protein 1-like 1 (391 aa).

An N-acetylmethionine modification is found at Met1. Residues 1 to 10 (MADIDNKEQS) show a composition bias toward basic and acidic residues. Positions 1 to 32 (MADIDNKEQSELDQDLDDVEEVEEEETGEETK) are disordered. The residue at position 2 (Ala2) is an N-acetylalanine. Phosphoserine is present on Ser10. Residues 11 to 28 (ELDQDLDDVEEVEEEETG) are compositionally biased toward acidic residues. Phosphothreonine occurs at positions 62 and 64. Residue Ser69 is modified to Phosphoserine. Lys116 is subject to N6-acetyllysine. An NAP1L motif motif is present at residues 125–150 (YEPTEEECEWKPDEEDEISEELKEKA). Residues 132–143 (CEWKPDEEDEIS) are compositionally biased toward acidic residues. Positions 132-163 (CEWKPDEEDEISEELKEKAKIEDEKKDEEKED) are disordered. Position 143 is a phosphoserine (Ser143). Basic and acidic residues predominate over residues 144–163 (EELKEKAKIEDEKKDEEKED). The Nuclear localization signal signature appears at 273-279 (IKKKQKH). The segment covering 346–376 (AIEDDDDDYDEEGEEADEEGEEEGDEENDPD) has biased composition (acidic residues). Residues 346–391 (AIEDDDDDYDEEGEEADEEGEEEGDEENDPDYDPKKDQNPAECKQQ) are disordered. The span at 377–391 (YDPKKDQNPAECKQQ) shows a compositional bias: basic and acidic residues. Residue Cys388 is modified to Cysteine methyl ester. The S-farnesyl cysteine moiety is linked to residue Cys388. Positions 389–391 (KQQ) are cleaved as a propeptide — removed in mature form.

It belongs to the nucleosome assembly protein (NAP) family. In terms of assembly, homodimer. The dimer binds strongly and sequentially to single and double H2A-H2B heterodimers. Interacts with ERCC6; this interaction increases ERCC6 processivity. Interacts with RAD54. Interacts with SETD1A. (Microbial infection) Interacts with human herpesvirus 8 protein LANA1 (via N-terminus); this interaction is required for LANA1-dependent DNA replication. As to quaternary structure, (Microbial infection) Interacts with hepatitis virus protein NS5A (via C-terminus); this interaction sequesters NAP1L1 in the cytoplasm, blocking its nuclear translocation. In terms of assembly, (Microbial infection) Interacts with Chikungunya virus non-structural protein 3 (via C-terminus). In terms of processing, monoglycylated on glutamate residues. Cannot be polyglycylated due to the absence of functional TTLL10 in human. Post-translationally, polyglutamylated by TTLL4 on glutamate residues, resulting in polyglutamate chains on the gamma-carboxyl group. Both polyglutamylation and monoglycylation modifications can coexist on the same protein on adjacent residues, and lowering polyglycylation levels increases polyglutamylation, and reciprocally. As to expression, ubiquitously expressed.

The protein localises to the nucleus. It localises to the melanosome. Its subcellular location is the cytoplasm. Its function is as follows. Histone chaperone that plays a role in the nuclear import of H2A-H2B and nucleosome assembly. Also participates in several important DNA repair mechanisms: greatly enhances ERCC6-mediated chromatin remodeling which is essential for transcription-coupled nucleotide excision DNA repair. Also stimulates homologous recombination (HR) by RAD51 and RAD54 which is essential in mitotic DNA double strand break (DSB) repair. Plays a key role in the regulation of embryonic neurogenesis. Promotes the proliferation of neural progenitors and inhibits neuronal differentiation during cortical development. Regulates neurogenesis via the modulation of RASSF10; regulates RASSF10 expression by promoting SETD1A-mediated H3K4 methylation at the RASSF10 promoter. Functionally, (Microbial infection) Positively regulates Epstein-Barr virus reactivation in epithelial cells through the induction of viral BZLF1 expression. In terms of biological role, (Microbial infection) Together with human herpesvirus 8 protein LANA1, assists the proper assembly of the nucleosome on the replicated viral DNA. This Homo sapiens (Human) protein is Nucleosome assembly protein 1-like 1 (NAP1L1).